The primary structure comprises 360 residues: Phospho-N-acetylmuramoyl-pentapeptide-transferase (360 aa).

10 helical membrane passes run 27 to 47 (IVSLLTALFISLWMGPHLIAW), 72 to 92 (PTMGGLMILFSITISVLMWAY), 94 to 114 (SNPYVWCVLFILIGYGIVGFI), 132 to 152 (WKYFWQSIIALAAAFTMYSIG), 168 to 188 (IMPQLGLLYVLLAYFVIVGTS), 199 to 219 (GLAIMPTVFVAAGFALVAWAT), 236 to 256 (AGELVIVCTAIVGAGLGFLWF), 263 to 283 (VFMGDVGSLALGGALGTIAVL), 288 to 308 (FLLVIMGGVFVVETLSVILQV), and 338 to 358 (VIVRFWIISLMLVLIGLATLK).

This sequence belongs to the glycosyltransferase 4 family. MraY subfamily. The cofactor is Mg(2+).

Its subcellular location is the cell inner membrane. The catalysed reaction is UDP-N-acetyl-alpha-D-muramoyl-L-alanyl-gamma-D-glutamyl-meso-2,6-diaminopimeloyl-D-alanyl-D-alanine + di-trans,octa-cis-undecaprenyl phosphate = di-trans,octa-cis-undecaprenyl diphospho-N-acetyl-alpha-D-muramoyl-L-alanyl-D-glutamyl-meso-2,6-diaminopimeloyl-D-alanyl-D-alanine + UMP. The protein operates within cell wall biogenesis; peptidoglycan biosynthesis. Functionally, catalyzes the initial step of the lipid cycle reactions in the biosynthesis of the cell wall peptidoglycan: transfers peptidoglycan precursor phospho-MurNAc-pentapeptide from UDP-MurNAc-pentapeptide onto the lipid carrier undecaprenyl phosphate, yielding undecaprenyl-pyrophosphoryl-MurNAc-pentapeptide, known as lipid I. The protein is Phospho-N-acetylmuramoyl-pentapeptide-transferase of Yersinia pestis bv. Antiqua (strain Angola).